Reading from the N-terminus, the 176-residue chain is Nucleoside triphosphate/diphosphate phosphatase (176 aa).

Arginine 23 acts as the Proton donor in catalysis. The Mg(2+) site is built by asparagine 87, aspartate 103, aspartate 105, aspartate 107, aspartate 120, and glutamate 123.

It belongs to the Ntdp family. Requires Mg(2+) as cofactor.

The catalysed reaction is a ribonucleoside 5'-triphosphate + H2O = a ribonucleoside 5'-diphosphate + phosphate + H(+). The enzyme catalyses a ribonucleoside 5'-diphosphate + H2O = a ribonucleoside 5'-phosphate + phosphate + H(+). Functionally, has nucleoside phosphatase activity towards nucleoside triphosphates and nucleoside diphosphates. This chain is Nucleoside triphosphate/diphosphate phosphatase, found in Bacillus anthracis (strain A0248).